Here is a 272-residue protein sequence, read N- to C-terminus: Shikimate dehydrogenase (NADP(+)) (272 aa).

Residues 14–16 (SKS) and Thr61 each bind shikimate. Catalysis depends on Lys65, which acts as the Proton acceptor. Residue Glu77 participates in NADP(+) binding. Asn86 and Asp102 together coordinate shikimate. NADP(+) is bound by residues 126–130 (GAGGA), 149–154 (NRTASR), and Met213. Tyr215 provides a ligand contact to shikimate. NADP(+) is bound at residue Gly237.

This sequence belongs to the shikimate dehydrogenase family. As to quaternary structure, homodimer.

The enzyme catalyses shikimate + NADP(+) = 3-dehydroshikimate + NADPH + H(+). The protein operates within metabolic intermediate biosynthesis; chorismate biosynthesis; chorismate from D-erythrose 4-phosphate and phosphoenolpyruvate: step 4/7. Involved in the biosynthesis of the chorismate, which leads to the biosynthesis of aromatic amino acids. Catalyzes the reversible NADPH linked reduction of 3-dehydroshikimate (DHSA) to yield shikimate (SA). In Salmonella choleraesuis (strain SC-B67), this protein is Shikimate dehydrogenase (NADP(+)).